Consider the following 522-residue polypeptide: Peptide chain release factor 3 (522 aa).

Residues 10-277 (ASRKTFAIIS…TFVDFAPSPS (268 aa)) enclose the tr-type G domain. GTP-binding positions include 19-26 (SHPDAGKT), 87-91 (DTPGH), and 141-144 (NKMD).

Belongs to the TRAFAC class translation factor GTPase superfamily. Classic translation factor GTPase family. PrfC subfamily.

The protein localises to the cytoplasm. Functionally, increases the formation of ribosomal termination complexes and stimulates activities of RF-1 and RF-2. It binds guanine nucleotides and has strong preference for UGA stop codons. It may interact directly with the ribosome. The stimulation of RF-1 and RF-2 is significantly reduced by GTP and GDP, but not by GMP. The polypeptide is Peptide chain release factor 3 (Listeria monocytogenes serotype 4b (strain F2365)).